Consider the following 768-residue polypeptide: Ribosomal RNA large subunit methyltransferase K/L (768 aa).

The 116-residue stretch at 60–175 (DLYKICLWSR…DKQAELYLDL (116 aa)) folds into the THUMP domain.

It belongs to the methyltransferase superfamily. RlmKL family.

Its subcellular location is the cytoplasm. It catalyses the reaction guanosine(2445) in 23S rRNA + S-adenosyl-L-methionine = N(2)-methylguanosine(2445) in 23S rRNA + S-adenosyl-L-homocysteine + H(+). It carries out the reaction guanosine(2069) in 23S rRNA + S-adenosyl-L-methionine = N(2)-methylguanosine(2069) in 23S rRNA + S-adenosyl-L-homocysteine + H(+). Specifically methylates the guanine in position 2445 (m2G2445) and the guanine in position 2069 (m7G2069) of 23S rRNA. The sequence is that of Ribosomal RNA large subunit methyltransferase K/L from Psychrobacter arcticus (strain DSM 17307 / VKM B-2377 / 273-4).